A 616-amino-acid polypeptide reads, in one-letter code: MLRTIVPARLEFRDGVPYSAAYGDVYHSADGGPGQARHVFLAGCGLPAAWAGRDSFVVLETGFGTGLNFLATWAAWRDDPARPSRLHFLSVEKHPFQAADLARIHAQWPEFAELSEVLRGNWPMLLPGFHRVALDGGRVQLTLMLGEAAECLHEVEARVDAFYLDGFAPDRNTDLWQPQLFETLAWLANPGATAATYTVAAPVLQGLTQAGFACEKRRGYGRKRHCMSARFAGRSRAEVSAAPRHVAVIGGGVAGAAAARALVDRGVSVTLLERATAPAEGASGNPVAVFRPLISRDDNRATRLTRAAFLHDLRAWAALGECVQWARCGVLHLARDAATAAKQQQALAEIALPADYARWVDLGEARELAHWSVAAPGTFYSAAGWVVPGSLCRAWLDHPGIGLQTNRAVGRLQAVSNGWQILDREGHALAEADAVVLANARDASRLALGQAWPLHTVRGQVTQLPAGSLPEIARVIAREGYVAPGAAGPLVGATYEHPEGYKENDDDTAPRAASDVANLARLEAILPGATQRFVSNEVSGRASLRATLPDRLPLVGAVDGQPGLYVAAGYASRGVVWAGLLGEALADLITGQPLPLEAELMRGIAPARFAGNRKTA.

The tRNA (mnm(5)s(2)U34)-methyltransferase stretch occupies residues 1-232 (MLRTIVPARL…KRHCMSARFA (232 aa)). Residues 249–616 (IGGGVAGAAA…ARFAGNRKTA (368 aa)) form an FAD-dependent cmnm(5)s(2)U34 oxidoreductase region.

In the N-terminal section; belongs to the methyltransferase superfamily. tRNA (mnm(5)s(2)U34)-methyltransferase family. It in the C-terminal section; belongs to the DAO family. Requires FAD as cofactor.

It localises to the cytoplasm. It catalyses the reaction 5-aminomethyl-2-thiouridine(34) in tRNA + S-adenosyl-L-methionine = 5-methylaminomethyl-2-thiouridine(34) in tRNA + S-adenosyl-L-homocysteine + H(+). In terms of biological role, catalyzes the last two steps in the biosynthesis of 5-methylaminomethyl-2-thiouridine (mnm(5)s(2)U) at the wobble position (U34) in tRNA. Catalyzes the FAD-dependent demodification of cmnm(5)s(2)U34 to nm(5)s(2)U34, followed by the transfer of a methyl group from S-adenosyl-L-methionine to nm(5)s(2)U34, to form mnm(5)s(2)U34. This Thiobacillus denitrificans (strain ATCC 25259 / T1) protein is tRNA 5-methylaminomethyl-2-thiouridine biosynthesis bifunctional protein MnmC.